We begin with the raw amino-acid sequence, 300 residues long: Bifunctional protein FolD (300 aa).

NADP(+)-binding positions include 168-170 (GRS), Ser-193, and Ile-234.

It belongs to the tetrahydrofolate dehydrogenase/cyclohydrolase family. Homodimer.

The enzyme catalyses (6R)-5,10-methylene-5,6,7,8-tetrahydrofolate + NADP(+) = (6R)-5,10-methenyltetrahydrofolate + NADPH. The catalysed reaction is (6R)-5,10-methenyltetrahydrofolate + H2O = (6R)-10-formyltetrahydrofolate + H(+). Its pathway is one-carbon metabolism; tetrahydrofolate interconversion. In terms of biological role, catalyzes the oxidation of 5,10-methylenetetrahydrofolate to 5,10-methenyltetrahydrofolate and then the hydrolysis of 5,10-methenyltetrahydrofolate to 10-formyltetrahydrofolate. This is Bifunctional protein FolD from Ehrlichia ruminantium (strain Gardel).